Consider the following 294-residue polypeptide: Elongation factor Ts (294 aa).

Residues 79 to 82 (TDFV) form an involved in Mg(2+) ion dislocation from EF-Tu region.

It belongs to the EF-Ts family.

The protein resides in the cytoplasm. Functionally, associates with the EF-Tu.GDP complex and induces the exchange of GDP to GTP. It remains bound to the aminoacyl-tRNA.EF-Tu.GTP complex up to the GTP hydrolysis stage on the ribosome. The protein is Elongation factor Ts of Oceanobacillus iheyensis (strain DSM 14371 / CIP 107618 / JCM 11309 / KCTC 3954 / HTE831).